We begin with the raw amino-acid sequence, 313 residues long: Ribosomal RNA small subunit methyltransferase H (313 aa).

S-adenosyl-L-methionine contacts are provided by residues 35–37 (GGH), D55, F79, D101, and Q108.

Belongs to the methyltransferase superfamily. RsmH family.

It localises to the cytoplasm. It carries out the reaction cytidine(1402) in 16S rRNA + S-adenosyl-L-methionine = N(4)-methylcytidine(1402) in 16S rRNA + S-adenosyl-L-homocysteine + H(+). Functionally, specifically methylates the N4 position of cytidine in position 1402 (C1402) of 16S rRNA. The sequence is that of Ribosomal RNA small subunit methyltransferase H from Edwardsiella ictaluri (strain 93-146).